A 178-amino-acid polypeptide reads, in one-letter code: ATP synthase subunit delta (178 aa).

The protein belongs to the ATPase delta chain family. As to quaternary structure, F-type ATPases have 2 components, F(1) - the catalytic core - and F(0) - the membrane proton channel. F(1) has five subunits: alpha(3), beta(3), gamma(1), delta(1), epsilon(1). F(0) has three main subunits: a(1), b(2) and c(10-14). The alpha and beta chains form an alternating ring which encloses part of the gamma chain. F(1) is attached to F(0) by a central stalk formed by the gamma and epsilon chains, while a peripheral stalk is formed by the delta and b chains.

It localises to the cell inner membrane. In terms of biological role, f(1)F(0) ATP synthase produces ATP from ADP in the presence of a proton or sodium gradient. F-type ATPases consist of two structural domains, F(1) containing the extramembraneous catalytic core and F(0) containing the membrane proton channel, linked together by a central stalk and a peripheral stalk. During catalysis, ATP synthesis in the catalytic domain of F(1) is coupled via a rotary mechanism of the central stalk subunits to proton translocation. This protein is part of the stalk that links CF(0) to CF(1). It either transmits conformational changes from CF(0) to CF(1) or is implicated in proton conduction. The chain is ATP synthase subunit delta from Methylococcus capsulatus (strain ATCC 33009 / NCIMB 11132 / Bath).